Consider the following 241-residue polypeptide: Tumor necrosis factor receptor superfamily member grnd (241 aa).

The N-terminal stretch at 1–27 (MSVRKLSALSLSIGGVPLIPSVSLVAA) is a signal peptide. Residues 28–98 (ANGESRDCHG…EMLDIQNTQQ (71 aa)) are Extracellular-facing. Intrachain disulfides connect Cys35–Cys47, Cys40–Cys54, Cys57–Cys77, and Cys61–Cys73. N-linked (GlcNAc...) asparagine glycosylation occurs at Asn63. Residues 99–119 (LILLLLTILLVLIALRCAFQF) traverse the membrane as a helical segment. At 120–241 (LRWLIGNRCF…PSAATIPVAF (122 aa)) the chain is on the cytoplasmic side.

As to quaternary structure, interacts (via extracellular cysteine-rich domain) with egr (via secreted TNF-homology soluble form); forms heterohexamers when 3 copies associate with egr trimers. Interacts with Traf6/TRAF2 and veli (via PDZ domain). N-glycosylated on Asn-63. Glycosylation regulates ligand binding, specifically reducing affinity for the TNF egr, thereby inhibiting activation of JNK signaling. As to expression, expressed in the adult midgut; under normal conditions expressed at lower levels than the other TNF receptor wgn.

The protein localises to the apical cell membrane. Its subcellular location is the cytoplasmic vesicle membrane. Acts as a receptor for TNF-cytokine egr. Plays a role in activation of JNK signaling and is required for egr-induced apoptosis, including in wing imaginal discs during development. May also play an egr-independent role in cell proliferation. TNF receptor involved in triggering JNK-dependent proliferation of the enteroblast-enterocyte lineage in response to stress-induced release of egr by intestinal stem cells and enteroblasts. Involved in regulation of insulin production in response to dietary protein shortage keeping systemic growth in check. Activation in brain insulin producing cells through binding of egr released into the hemolymph in response to dietary amino acid shortage, results in JNK-dependent inhibition of insulin production. The protein is Tumor necrosis factor receptor superfamily member grnd of Drosophila melanogaster (Fruit fly).